Here is a 210-residue protein sequence, read N- to C-terminus: Peptidyl-tRNA hydrolase (210 aa).

Tyrosine 30 contacts tRNA. Catalysis depends on histidine 35, which acts as the Proton acceptor. Positions 81, 83, and 129 each coordinate tRNA.

The protein belongs to the PTH family. As to quaternary structure, monomer.

It localises to the cytoplasm. The catalysed reaction is an N-acyl-L-alpha-aminoacyl-tRNA + H2O = an N-acyl-L-amino acid + a tRNA + H(+). In terms of biological role, hydrolyzes ribosome-free peptidyl-tRNAs (with 1 or more amino acids incorporated), which drop off the ribosome during protein synthesis, or as a result of ribosome stalling. Functionally, catalyzes the release of premature peptidyl moieties from peptidyl-tRNA molecules trapped in stalled 50S ribosomal subunits, and thus maintains levels of free tRNAs and 50S ribosomes. The chain is Peptidyl-tRNA hydrolase from Bordetella petrii (strain ATCC BAA-461 / DSM 12804 / CCUG 43448).